We begin with the raw amino-acid sequence, 71 residues long: U3-agatoxin-Ao1a (71 aa).

Residues 1–20 (MKAVIFFCLLSVMVFTVIEA) form the signal peptide. A propeptide spanning residues 21–33 (VKEEGTKPAEAAR) is cleaved from the precursor. Intrachain disulfides connect Cys35–Cys51, Cys42–Cys56, Cys50–Cys66, and Cys58–Cys64. Ser70 carries the serine amide modification.

Belongs to the neurotoxin 07 (Beta/delta-agtx) family. 01 (aga-2) subfamily. As to expression, expressed by the venom gland.

It is found in the secreted. Its function is as follows. Insecticidal neurotoxin that modulates the insect Nav channel (DmNaV1/tipE (para/tipE)) in a unique manner, with both the activation and inactivation processes being affected. The voltage dependence of activation is shifted toward more hyperpolarized potentials (analogous to site 4 toxins) and a non-inactivating persistent sodium current is induced (site 3-like action). Interestingly, both effects take place in a voltage-dependent manner, producing a bell-shaped curve between -80 and 0 mV. Compared to beta/delta-agatoxin-1 to -3, this toxin appears to affect the insect sodium channel only weakly. This Agelena orientalis (Funnel-web spider) protein is U3-agatoxin-Ao1a.